Reading from the N-terminus, the 243-residue chain is Orotidine 5'-phosphate decarboxylase (243 aa).

Residues aspartate 19, lysine 41, 69 to 78 (DLKFFDIPAT), threonine 124, arginine 185, glutamine 194, glycine 214, and arginine 215 contribute to the substrate site. Lysine 71 (proton donor) is an active-site residue.

The protein belongs to the OMP decarboxylase family. Type 1 subfamily. Homodimer.

It catalyses the reaction orotidine 5'-phosphate + H(+) = UMP + CO2. It functions in the pathway pyrimidine metabolism; UMP biosynthesis via de novo pathway; UMP from orotate: step 2/2. Its function is as follows. Catalyzes the decarboxylation of orotidine 5'-monophosphate (OMP) to uridine 5'-monophosphate (UMP). The sequence is that of Orotidine 5'-phosphate decarboxylase from Xanthomonas euvesicatoria pv. vesicatoria (strain 85-10) (Xanthomonas campestris pv. vesicatoria).